Consider the following 209-residue polypeptide: 3-demethoxyubiquinol 3-hydroxylase (209 aa).

E58, E88, H91, E140, E172, and H175 together coordinate Fe cation.

This sequence belongs to the COQ7 family. Fe cation serves as cofactor.

It is found in the cell membrane. The catalysed reaction is a 5-methoxy-2-methyl-3-(all-trans-polyprenyl)benzene-1,4-diol + AH2 + O2 = a 3-demethylubiquinol + A + H2O. It participates in cofactor biosynthesis; ubiquinone biosynthesis. Its function is as follows. Catalyzes the hydroxylation of 2-nonaprenyl-3-methyl-6-methoxy-1,4-benzoquinol during ubiquinone biosynthesis. This is 3-demethoxyubiquinol 3-hydroxylase from Polynucleobacter necessarius subsp. necessarius (strain STIR1).